The chain runs to 715 residues: Fatty acid oxidation complex subunit alpha (715 aa).

Residues 1-190 (MIYQGKAITV…KVGAVDAVVA (190 aa)) form an enoyl-CoA hydratase/isomerase region. D297 contributes to the substrate binding site. The 3-hydroxyacyl-CoA dehydrogenase stretch occupies residues 312-715 (KDVKLAAVLG…MAKNGQKFFG (404 aa)). NAD(+) contacts are provided by residues M325, D344, 401–403 (VVE), K408, and S430. Residue H451 is the For 3-hydroxyacyl-CoA dehydrogenase activity of the active site. NAD(+) is bound at residue N454. Positions 501 and 660 each coordinate substrate.

It in the N-terminal section; belongs to the enoyl-CoA hydratase/isomerase family. In the C-terminal section; belongs to the 3-hydroxyacyl-CoA dehydrogenase family. Heterotetramer of two alpha chains (FadB) and two beta chains (FadA).

The enzyme catalyses a (3S)-3-hydroxyacyl-CoA + NAD(+) = a 3-oxoacyl-CoA + NADH + H(+). It catalyses the reaction a (3S)-3-hydroxyacyl-CoA = a (2E)-enoyl-CoA + H2O. The catalysed reaction is a 4-saturated-(3S)-3-hydroxyacyl-CoA = a (3E)-enoyl-CoA + H2O. It carries out the reaction (3S)-3-hydroxybutanoyl-CoA = (3R)-3-hydroxybutanoyl-CoA. The enzyme catalyses a (3Z)-enoyl-CoA = a 4-saturated (2E)-enoyl-CoA. It catalyses the reaction a (3E)-enoyl-CoA = a 4-saturated (2E)-enoyl-CoA. Its pathway is lipid metabolism; fatty acid beta-oxidation. In terms of biological role, involved in the aerobic and anaerobic degradation of long-chain fatty acids via beta-oxidation cycle. Catalyzes the formation of 3-oxoacyl-CoA from enoyl-CoA via L-3-hydroxyacyl-CoA. It can also use D-3-hydroxyacyl-CoA and cis-3-enoyl-CoA as substrate. This chain is Fatty acid oxidation complex subunit alpha, found in Pseudomonas aeruginosa (strain LESB58).